The chain runs to 103 residues: Co-chaperonin GroES (103 aa).

The protein belongs to the GroES chaperonin family. In terms of assembly, heptamer of 7 subunits arranged in a ring. Interacts with the chaperonin GroEL.

The protein localises to the cytoplasm. Together with the chaperonin GroEL, plays an essential role in assisting protein folding. The GroEL-GroES system forms a nano-cage that allows encapsulation of the non-native substrate proteins and provides a physical environment optimized to promote and accelerate protein folding. GroES binds to the apical surface of the GroEL ring, thereby capping the opening of the GroEL channel. The protein is Co-chaperonin GroES of Synechocystis sp. (strain ATCC 27184 / PCC 6803 / Kazusa).